The following is a 102-amino-acid chain: DNA/RNA-binding protein Alba 2 (102 aa).

DNA-binding residues include R10, R13, R40, R42, N43, R46, and R86.

The protein belongs to the histone-like Alba family. Forms homodimers and homotetramers; oligomerization is enhanced and stabilized by DNA. Interacts with Alba 1.

It localises to the cytoplasm. The protein resides in the chromosome. In terms of biological role, binds double-stranded DNA tightly but without sequence specificity. Involved in DNA compaction. This Aeropyrum pernix (strain ATCC 700893 / DSM 11879 / JCM 9820 / NBRC 100138 / K1) protein is DNA/RNA-binding protein Alba 2.